A 734-amino-acid polypeptide reads, in one-letter code: MALRFPRFSQGLAQDPTTRRIWFGIATAHDFESHDDITEERLYQNIFASHFGQLAIIFLWTSGNLFHVAWQGNFESWVQDPLHVRPIAHAIWDPHFGQPAVEAFTRGGALGPVNIAYSGVYQWWYTIGLRTNEDLYTGALFLLFISAIFLIAGWLHLQPKWKPSVSWFKNAESRLNHHLSGLFGVSSLAWTGHLVHVAIPGSRGEYVRWNNFLDVLPHPQGLGPLFTGQWNLYAQNPDSGSHLFGTSQGAGTAILTLLGGFHPQTQSLWLTDIAHHHLAIAFIFLVAGHMYRTNFGIGHSMKDLLDAHIPPGGRLGRGHKGLYDTINNSLHFQLGLALASLGVITSLVAQHMYSLPAYAFIAQDFTTQAALYTHHQYIAGFIMTGAFAHGAIFFIRDYNPEQNEDNVLARMLDHKEAIISHLSWASLFLGFHTLGLYVHNDVMLAFGTPEKQILIEPIFAQWIQSAHGKTSYGFDVLLSSTSGPAFNAGRSIWLPGWLNAVNENSNSLFLTIGPGDFLVHHAIALGLHTTTLILVKGALDARGSKLMPDKKDFGYSFPCDGPGRGGTCDISAWDAFYLAVFWMLNTIGWVTFYWHWKHITLWQGNVSQFNESSTYLMGWLRDYLWLNSSQLINGYNPFGMNSLSVWAWMFLFGHLVWAIGFMFLISWRGYWQELIETLAWAHERTPLANLIRWRDKPVALSIVQARLVGLAHFSVGYIFTYAAFLIASTSGKFG.

The next 8 membrane-spanning stretches (helical) occupy residues 46 to 69, 135 to 158, 175 to 199, 273 to 291, 330 to 353, 369 to 395, 417 to 439, and 517 to 535; these read IFAS…FHVA, LYTG…LHLQ, LNHH…HVAI, IAHH…GHMY, LHFQ…QHMY, AALY…IFFI, AIIS…LYVH, and FLVH…LILV. 2 residues coordinate [4Fe-4S] cluster: C559 and C568. A run of 2 helical transmembrane segments spans residues 575–596 and 643–665; these read AFYL…YWHW and LSVW…MFLI. Chlorophyll a contacts are provided by H654, M662, and Y670. Residue W671 participates in phylloquinone binding. Residues 707 to 727 form a helical membrane-spanning segment; sequence LVGLAHFSVGYIFTYAAFLIA.

This sequence belongs to the PsaA/PsaB family. The PsaA/B heterodimer binds the P700 chlorophyll special pair and subsequent electron acceptors. PSI consists of a core antenna complex that captures photons, and an electron transfer chain that converts photonic excitation into a charge separation. The eukaryotic PSI reaction center is composed of at least 11 subunits. Requires P700 is a chlorophyll a/chlorophyll a' dimer, A0 is one or more chlorophyll a, A1 is one or both phylloquinones and FX is a shared 4Fe-4S iron-sulfur center. as cofactor.

It is found in the plastid. The protein localises to the chloroplast thylakoid membrane. The enzyme catalyses reduced [plastocyanin] + hnu + oxidized [2Fe-2S]-[ferredoxin] = oxidized [plastocyanin] + reduced [2Fe-2S]-[ferredoxin]. PsaA and PsaB bind P700, the primary electron donor of photosystem I (PSI), as well as the electron acceptors A0, A1 and FX. PSI is a plastocyanin-ferredoxin oxidoreductase, converting photonic excitation into a charge separation, which transfers an electron from the donor P700 chlorophyll pair to the spectroscopically characterized acceptors A0, A1, FX, FA and FB in turn. Oxidized P700 is reduced on the lumenal side of the thylakoid membrane by plastocyanin. The chain is Photosystem I P700 chlorophyll a apoprotein A2 from Coffea arabica (Arabian coffee).